We begin with the raw amino-acid sequence, 8545 residues long: Nuclear anchorage protein 1 (8545 aa).

The actin-binding stretch occupies residues 1–325 (MSSSPPARPC…VITYVSQFVR (325 aa)). The Cytoplasmic portion of the chain corresponds to 1–8494 (MSSSPPARPC…QRSRWRRVLR (8494 aa)). Residues 23 to 130 (KAQKNTFTRW…LIWQIILHFQ (108 aa)) enclose the Calponin-homology (CH) 1 domain. Residues 148–197 (TEEPTSSAQPEVVVTAPSPTPSSKKSHSKVSSLSGSKTSLASGEKAPSSP) form a disordered region. The span at 159-190 (VVVTAPSPTPSSKKSHSKVSSLSGSKTSLASG) shows a compositional bias: low complexity. A Calponin-homology (CH) 2 domain is found at 222 to 328 (QSVEQVFLRW…YVSQFVRMFG (107 aa)). 19 coiled-coil regions span residues 754–774 (NIRD…NHSR), 1072–1101 (SFFQ…LMVH), 1215–1236 (ADIL…EIQA), 1324–1384 (DTKK…QFED), 1574–1629 (RSIE…DLVK), 1725–1754 (ENRN…YEDA), 1950–1981 (PAII…NYNQ), 2103–2580 (DNIE…KKSD), 2682–2712 (SVKE…KIAK), 2852–2949 (IMQE…NIGK), 3002–3119 (DQIV…KTVV), 3178–3295 (DDEK…DEFK), 3346–3417 (QLQH…PEND), 3482–3552 (DELI…EKSL), 3587–3703 (KAEE…ELLD), 3781–3839 (ALKA…KEQL), 3902–4022 (AAHD…KTVV), 4114–4198 (LDVA…DEFK), and 4249–4320 (QLQH…PEND). Positions 3010–3019 (EAEDVTAKES) are enriched in basic and acidic residues. Positions 3010-3033 (EAEDVTAKESAKKKKKDKKKSPQE) are disordered. Tandem repeats lie at residues 3241–4143 (QVAK…KIDP), 4144–5097 (QVAK…KIDP), 5098–6000 (QVAK…KIDP), 6001–6903 (QVAK…KIDP), 6904–7806 (QVAK…KIDP), and 7807–8199 (QVAK…EERA). The segment at 3241 to 8199 (QVAKDIKDSK…TLIPDLEERA (4959 aa)) is 6 X tandem repeat. The span at 3913-3922 (EAEDVTAKES) shows a compositional bias: basic and acidic residues. A disordered region spans residues 3913 to 3936 (EAEDVTAKESAKKKKKDKKKSPQE). A compositionally biased stretch (basic and acidic residues) spans 4372–4393 (ITREDGGDDNKSPDELIDDRGR). Positions 4372–4395 (ITREDGGDDNKSPDELIDDRGRST) are disordered. Coiled-coil stretches lie at residues 4436–4506 (DELI…EKSL), 4541–4657 (KAEE…ELLD), 4735–4793 (ALKA…KEQL), 4856–4976 (AAHD…KTVV), 5035–5152 (DDEK…DEFK), 5203–5274 (QLQH…PEND), 5339–5409 (DELI…EKSL), 5444–5560 (KAEE…ELLD), 5638–5696 (ALKA…KEQL), 5759–5879 (AAHD…KTVV), 5938–6055 (DDEK…DEFK), 6106–6177 (QLQH…PEND), 6242–6312 (DELI…EKSL), 6347–6463 (KAEE…ELLD), 6541–6599 (ALKA…KEQL), 6662–6782 (AAHD…KTVV), 6841–6958 (DDEK…DEFK), 7009–7080 (QLQH…PEND), 7145–7215 (DELI…EKSL), 7250–7366 (KAEE…ELLD), 7444–7502 (ALKA…KEQL), 7565–7685 (AAHD…KTVV), 7744–7861 (DDEK…DEFK), 7912–7983 (QLQH…PEND), 8048–8118 (DELI…EKSL), 8153–8204 (KAEE…IWER), 8273–8329 (VAED…DINN), and 8370–8390 (STSI…KEIE). Basic and acidic residues predominate over residues 4867–4876 (EAEDVTAKES). The interval 4867–4890 (EAEDVTAKESAKKKKKDKKKSPQE) is disordered. Residues 5770–5779 (EAEDVTAKES) are compositionally biased toward basic and acidic residues. Residues 5770–5793 (EAEDVTAKESAKKKKKDKKKSPQE) form a disordered region. The span at 6673-6682 (EAEDVTAKES) shows a compositional bias: basic and acidic residues. Residues 6673–6696 (EAEDVTAKESAKKKKKDKKKSPQE) are disordered. Positions 7576-7585 (EAEDVTAKES) are enriched in basic and acidic residues. The disordered stretch occupies residues 7576-7599 (EAEDVTAKESAKKKKKDKKKSPQE). Disordered stretches follow at residues 8391-8418 (PRLQ…KPYD) and 8449-8480 (SDSE…LSEE). The segment covering 8401 to 8411 (DNEDDEDEEKG) has biased composition (acidic residues). Over residues 8451-8464 (SESRSEFDSLDSRS) the composition is skewed to basic and acidic residues. A KASH domain is found at 8486-8545 (RSRWRRVLRTALPLQALLVLLMGAACLVPHCDDEYCCQLLNNFAKSFDPSLEFVNGPPPF). The helical; Anchor for type IV membrane protein transmembrane segment at 8495–8513 (TALPLQALLVLLMGAACLV) threads the bilayer. The Perinuclear space portion of the chain corresponds to 8514 to 8545 (PHCDDEYCCQLLNNFAKSFDPSLEFVNGPPPF).

The protein belongs to the nesprin family. In terms of assembly, interacts with F-actin via its N-terminal domain. Most likely interacts with unc-84; the interaction is probably required to recruit anc-1 to the nuclear envelope. As to expression, ubiquitously expressed in all postembryonic cells.

It localises to the nucleus outer membrane. The protein resides in the cytoplasm. The protein localises to the cytoskeleton. Plays a central role in nuclear and mitochondrial anchoring. Probably connects nuclei to the cytoskeleton by interacting with unc-84 at the nuclear envelope and with F-actin in the cytoplasm, creating a bridge across the nuclear envelope between the cytoskeleton and the nucleus. Has a role in positioning of the cell body of the PVQ lumbar interneuron. The sequence is that of Nuclear anchorage protein 1 from Caenorhabditis elegans.